Consider the following 353-residue polypeptide: Mas-related G-protein coupled receptor member B5 (353 aa).

Topologically, residues 1–67 (MPDSPTESYG…SCIITFNTLN (67 aa)) are extracellular. N-linked (GlcNAc...) asparagine glycosylation is found at Asn-26 and Asn-44. Residues 68–90 (FLTATISVVGTAGNATVLRLLGF) form a helical membrane-spanning segment. Over 91 to 96 (HMHRYA) the chain is Cytoplasmic. Residues 97–117 (FSVYVFNLAGADFLYLCTQTV) traverse the membrane as a helical segment. The Extracellular segment spans residues 118-131 (YSLECVLQFDNSYF). The helical transmembrane segment at 132-152 (YFLLTILMFAYLAALCMIPAI) threads the bilayer. Residues 153–180 (STERCLSVTWPIWYHCQRPRHTSATVCA) lie on the Cytoplasmic side of the membrane. A helical membrane pass occupies residues 181-201 (LFWAFSLLLRLLLGQGCGFLF). At 202–213 (GKYDYYFCRYCS) the chain is on the extracellular side. Residues 214–234 (FITTAFLIVLFVVPFVSSLAM) form a helical membrane-spanning segment. At 235 to 253 (LTKIICGSHRIPVTRFYVT) the chain is on the cytoplasmic side. The helical transmembrane segment at 254–274 (IAVTVLVFTFFGLPVGIISLL) threads the bilayer. Topologically, residues 275 to 289 (LPRIVVFRGVFYIYK) are extracellular. A helical membrane pass occupies residues 290 to 310 (IVTFLYSVNCCANPIIYFLIG). The Cytoplasmic segment spans residues 311 to 353 (SIRHHRLQRQSLKLLLQRAMQDTPEEEGGVKGPSQKSNELEIV). The disordered stretch occupies residues 333-353 (TPEEEGGVKGPSQKSNELEIV).

It belongs to the G-protein coupled receptor 1 family. Mas subfamily. In terms of tissue distribution, expressed strongly in newborn dorsal root ganglia, adult dorsal root ganglia and trigeminal ganlia.

It localises to the membrane. Functionally, orphan receptor. Probably involved in the function of nociceptive neurons. May regulate nociceptor function and/or development, including the sensation or modulation of pain. The protein is Mas-related G-protein coupled receptor member B5 (Mrgprb5) of Rattus norvegicus (Rat).